The chain runs to 158 residues: NAD(P)H-quinone oxidoreductase subunit J, chloroplastic (158 aa).

Belongs to the complex I 30 kDa subunit family. In terms of assembly, NDH is composed of at least 16 different subunits, 5 of which are encoded in the nucleus.

The protein localises to the plastid. Its subcellular location is the chloroplast thylakoid membrane. The enzyme catalyses a plastoquinone + NADH + (n+1) H(+)(in) = a plastoquinol + NAD(+) + n H(+)(out). The catalysed reaction is a plastoquinone + NADPH + (n+1) H(+)(in) = a plastoquinol + NADP(+) + n H(+)(out). In terms of biological role, NDH shuttles electrons from NAD(P)H:plastoquinone, via FMN and iron-sulfur (Fe-S) centers, to quinones in the photosynthetic chain and possibly in a chloroplast respiratory chain. The immediate electron acceptor for the enzyme in this species is believed to be plastoquinone. Couples the redox reaction to proton translocation, and thus conserves the redox energy in a proton gradient. The protein is NAD(P)H-quinone oxidoreductase subunit J, chloroplastic of Fagopyrum esculentum subsp. ancestrale (Wild buckwheat).